The sequence spans 209 residues: Egg case collagen (209 aa).

Positions 1–129 are nonhelical region; it reads VYMSGXGKPP…YKGNHGFYLV (129 aa). A triple-helical region region spans residues 130 to 209; that stretch reads LPAGYPGTPG…DPGLPGEYGV (80 aa). Residues 138–209 form a disordered region; sequence PGTPGPRGGP…DPGLPGEYGV (72 aa). Positions 142 to 162 are enriched in gly residues; it reads GPRGGPGDPGMPGEPGVGFPG.

Major component of the egg case wall which is secreted by the oviduct. The egg case combines mechanical strength and toughness with high permeability to small molecules and ions. The polypeptide is Egg case collagen (Scyliorhinus canicula (Small-spotted catshark)).